Here is a 597-residue protein sequence, read N- to C-terminus: Pentatricopeptide repeat-containing protein At2g21090 (597 aa).

13 PPR repeats span residues 45 to 79 (PFDL…GFKR), 81 to 111 (NTLL…MHLR), 112 to 142 (NLYS…MPER), 143 to 177 (DVVS…GIKF), 178 to 212 (NEFS…GFLS), 213 to 243 (NVVL…MTVK), 244 to 274 (DIHI…MPEK), 275 to 309 (NPVS…GVKP), 310 to 344 (EQFT…NVRP), 345 to 375 (NAIV…CDDK), 377 to 411 (DCVF…RVQP), 412 to 447 (NRTT…GIVP), and 448 to 478 (DQEH…MPFE). The interval 483–558 (IWNAILGVCR…EKAVSWIEIE (76 aa)) is type E motif. Positions 559–591 (KKVEAFTVSDGSHAHARKEEIYFILHNLAAVIE) are type E(+) motif.

It belongs to the PPR family. PCMP-E subfamily.

This is Pentatricopeptide repeat-containing protein At2g21090 (PCMP-E48) from Arabidopsis thaliana (Mouse-ear cress).